Consider the following 457-residue polypeptide: Pup--protein ligase (457 aa).

Glu-9 is a Mg(2+) binding site. Residue Arg-53 participates in ATP binding. Residue Tyr-55 coordinates Mg(2+). The active-site Proton acceptor is Asp-57. Glu-63 contributes to the Mg(2+) binding site. Positions 66 and 424 each coordinate ATP.

It belongs to the Pup ligase/Pup deamidase family. Pup-conjugating enzyme subfamily.

The enzyme catalyses ATP + [prokaryotic ubiquitin-like protein]-L-glutamate + [protein]-L-lysine = ADP + phosphate + N(6)-([prokaryotic ubiquitin-like protein]-gamma-L-glutamyl)-[protein]-L-lysine.. Its pathway is protein degradation; proteasomal Pup-dependent pathway. The protein operates within protein modification; protein pupylation. Its function is as follows. Catalyzes the covalent attachment of the prokaryotic ubiquitin-like protein modifier Pup to the proteasomal substrate proteins, thereby targeting them for proteasomal degradation. This tagging system is termed pupylation. The ligation reaction involves the side-chain carboxylate of the C-terminal glutamate of Pup and the side-chain amino group of a substrate lysine. The protein is Pup--protein ligase of Xylanimonas cellulosilytica (strain DSM 15894 / JCM 12276 / CECT 5975 / KCTC 9989 / LMG 20990 / NBRC 107835 / XIL07).